We begin with the raw amino-acid sequence, 198 residues long: Sortase D (198 aa).

Residues 7 to 25 (LFIIAAGLVIAGYGGFKLI) traverse the membrane as a helical segment. The segment covering 36–46 (KEAKLAAKKPQ) has biased composition (basic and acidic residues). The disordered stretch occupies residues 36-67 (KEAKLAAKKPQEASGTKNSTDQAKNKASFKPE). Positions 48-57 (ASGTKNSTDQ) are enriched in polar residues. His-119 acts as the Proton donor/acceptor in catalysis. Cys-177 functions as the Acyl-thioester intermediate in the catalytic mechanism.

The protein belongs to the bacterial sortase family. Class D subfamily.

The protein localises to the cell membrane. Functionally, transpeptidase that anchors surface proteins to the cell wall. Recognizes and modifies its substrate by proteolytic cleavage of a C-terminal sorting signal. Following cleavage, a covalent intermediate is formed via a thioester bond between the sortase and its substrate, which is then transferred and covalently attached to the cell wall. This sortase recognizes a Leu-Pro-Asp-Thr-Ser/Ala (LPDTS/A) motif. It has two substrates, YhcR and YfkN. The sequence is that of Sortase D from Bacillus subtilis (strain 168).